The following is a 341-amino-acid chain: S-adenosylmethionine:tRNA ribosyltransferase-isomerase (341 aa).

This sequence belongs to the QueA family. As to quaternary structure, monomer.

It localises to the cytoplasm. The catalysed reaction is 7-aminomethyl-7-carbaguanosine(34) in tRNA + S-adenosyl-L-methionine = epoxyqueuosine(34) in tRNA + adenine + L-methionine + 2 H(+). It functions in the pathway tRNA modification; tRNA-queuosine biosynthesis. Functionally, transfers and isomerizes the ribose moiety from AdoMet to the 7-aminomethyl group of 7-deazaguanine (preQ1-tRNA) to give epoxyqueuosine (oQ-tRNA). This chain is S-adenosylmethionine:tRNA ribosyltransferase-isomerase, found in Clostridium botulinum (strain Alaska E43 / Type E3).